The chain runs to 274 residues: Malonyl-[acyl-carrier protein] O-methyltransferase (274 aa).

The protein belongs to the methyltransferase superfamily.

It catalyses the reaction malonyl-[ACP] + S-adenosyl-L-methionine = malonyl-[ACP] methyl ester + S-adenosyl-L-homocysteine. It participates in cofactor biosynthesis; biotin biosynthesis. Functionally, converts the free carboxyl group of a malonyl-thioester to its methyl ester by transfer of a methyl group from S-adenosyl-L-methionine (SAM). It allows to synthesize pimeloyl-ACP via the fatty acid synthetic pathway. This Priestia megaterium (strain DSM 319 / IMG 1521) (Bacillus megaterium) protein is Malonyl-[acyl-carrier protein] O-methyltransferase.